We begin with the raw amino-acid sequence, 332 residues long: L-lactate dehydrogenase A chain (332 aa).

Ala2 is modified (N-acetylalanine). An N6-acetyllysine; alternate modification is found at Lys5. Lys5 bears the N6-succinyllysine; alternate mark. Lys14 carries the post-translational modification N6-acetyllysine. Residue 29–57 (GAVGMACAISILMKDLADEVALVDVMEDK) participates in NAD(+) binding. An N6-acetyllysine; alternate modification is found at Lys57. A Glycyl lysine isopeptide (Lys-Gly) (interchain with G-Cter in SUMO2); alternate cross-link involves residue Lys57. Lys81 carries the post-translational modification N6-acetyllysine. Arg106 serves as a coordination point for substrate. An N6-acetyllysine; alternate modification is found at Lys118. An N6-succinyllysine; alternate modification is found at Lys118. Lys126 carries the post-translational modification N6-acetyllysine. Asn138 contacts NAD(+). Positions 138 and 169 each coordinate substrate. The active-site Proton acceptor is His193. Lys224 and Lys232 each carry N6-acetyllysine. Tyr239 carries the post-translational modification Phosphotyrosine. Lys243 is modified (N6-acetyllysine). Thr248 contributes to the substrate binding site. At Thr309 the chain carries Phosphothreonine. Residue Lys318 is modified to N6-acetyllysine; alternate. Lys318 carries the N6-succinyllysine; alternate modification. Thr322 carries the post-translational modification Phosphothreonine.

The protein belongs to the LDH/MDH superfamily. LDH family. Homotetramer. Interacts with PTEN upstream reading frame protein MP31. ISGylated.

The protein localises to the cytoplasm. It carries out the reaction (S)-lactate + NAD(+) = pyruvate + NADH + H(+). Its pathway is fermentation; pyruvate fermentation to lactate; (S)-lactate from pyruvate: step 1/1. In terms of biological role, interconverts simultaneously and stereospecifically pyruvate and lactate with concomitant interconversion of NADH and NAD(+). The polypeptide is L-lactate dehydrogenase A chain (LDHA) (Bos taurus (Bovine)).